The following is a 247-amino-acid chain: Probable transcriptional regulatory protein EUBELI_00902 (247 aa).

This sequence belongs to the TACO1 family.

The protein resides in the cytoplasm. The polypeptide is Probable transcriptional regulatory protein EUBELI_00902 (Lachnospira eligens (strain ATCC 27750 / DSM 3376 / VPI C15-48 / C15-B4) (Eubacterium eligens)).